A 269-amino-acid chain; its full sequence is MDTHDNIITFNHVRFKYNSDEPLALNDVSFGIPKGKWTSIVGHNGSGKSTIAKLMVGIEKPSDGHIYFRNQCINQQNLSDLRQHIGIVFQNPENQFVGSTVAFDVAFGLENNSVSYDDMQRIVPKALEDVEMLDRADYEPQSLSGGQKQRVAIAGVLALNTDVIILDEATSMLDPAGRKELISLIHRLKEEKEVTIISITHDLTEAAEADYLVVLNDGEVYQTGKPHDVFNDGDGLTEIGLDLPFSIRMARTLLGSTDFITYEGLVKKI.

Positions 8–242 constitute an ABC transporter domain; the sequence is ITFNHVRFKY…GDGLTEIGLD (235 aa). 42-49 lines the ATP pocket; that stretch reads GHNGSGKS.

This sequence belongs to the ABC transporter superfamily. Energy-coupling factor EcfA family. In terms of assembly, forms a stable energy-coupling factor (ECF) transporter complex composed of 2 membrane-embedded substrate-binding proteins (S component), 2 ATP-binding proteins (A component) and 2 transmembrane proteins (T component).

The protein localises to the cell membrane. Functionally, ATP-binding (A) component of a common energy-coupling factor (ECF) ABC-transporter complex. Unlike classic ABC transporters this ECF transporter provides the energy necessary to transport a number of different substrates. In Staphylococcus saprophyticus subsp. saprophyticus (strain ATCC 15305 / DSM 20229 / NCIMB 8711 / NCTC 7292 / S-41), this protein is Energy-coupling factor transporter ATP-binding protein EcfA1.